A 291-amino-acid polypeptide reads, in one-letter code: Lipoyl synthase, organellar chromatophore (291 aa).

Positions 33, 38, 44, 59, 63, 66, and 274 each coordinate [4Fe-4S] cluster. Positions 45–263 (FAGGTATFLI…AIGELEMNFL (219 aa)) constitute a Radical SAM core domain.

The protein belongs to the radical SAM superfamily. Lipoyl synthase family. It depends on [4Fe-4S] cluster as a cofactor.

The protein localises to the plastid. It localises to the organellar chromatophore. The catalysed reaction is [[Fe-S] cluster scaffold protein carrying a second [4Fe-4S](2+) cluster] + N(6)-octanoyl-L-lysyl-[protein] + 2 oxidized [2Fe-2S]-[ferredoxin] + 2 S-adenosyl-L-methionine + 4 H(+) = [[Fe-S] cluster scaffold protein] + N(6)-[(R)-dihydrolipoyl]-L-lysyl-[protein] + 4 Fe(3+) + 2 hydrogen sulfide + 2 5'-deoxyadenosine + 2 L-methionine + 2 reduced [2Fe-2S]-[ferredoxin]. It participates in protein modification; protein lipoylation via endogenous pathway; protein N(6)-(lipoyl)lysine from octanoyl-[acyl-carrier-protein]: step 2/2. In terms of biological role, catalyzes the radical-mediated insertion of two sulfur atoms into the C-6 and C-8 positions of the octanoyl moiety bound to the lipoyl domains of lipoate-dependent enzymes, thereby converting the octanoylated domains into lipoylated derivatives. This Paulinella chromatophora protein is Lipoyl synthase, organellar chromatophore.